We begin with the raw amino-acid sequence, 430 residues long: Adenylosuccinate synthetase (430 aa).

GTP contacts are provided by residues 12-18 and 40-42; these read GDEGKGK and GHT. D13 (proton acceptor) is an active-site residue. 2 residues coordinate Mg(2+): D13 and G40. IMP is bound by residues 13 to 16, 38 to 41, T128, R142, Q223, T238, and R302; these read DEGK and NAGH. H41 acts as the Proton donor in catalysis. 298–304 contributes to the substrate binding site; that stretch reads TTTGRPR. GTP is bound by residues R304, 330 to 332, and 412 to 414; these read SID and SVG.

The protein belongs to the adenylosuccinate synthetase family. Homodimer. The cofactor is Mg(2+).

The protein localises to the cytoplasm. The enzyme catalyses IMP + L-aspartate + GTP = N(6)-(1,2-dicarboxyethyl)-AMP + GDP + phosphate + 2 H(+). It functions in the pathway purine metabolism; AMP biosynthesis via de novo pathway; AMP from IMP: step 1/2. Functionally, plays an important role in the de novo pathway of purine nucleotide biosynthesis. Catalyzes the first committed step in the biosynthesis of AMP from IMP. This chain is Adenylosuccinate synthetase, found in Streptococcus pyogenes serotype M12 (strain MGAS9429).